The primary structure comprises 232 residues: Protein TIFY 10c (232 aa).

The disordered stretch occupies residues 54-73 (PPAAGAGGAFRPPPTTMNLL). Positions 114–149 (AGEKAQQLTIFYGGKVVVFENFPSTKVKDLLQIVST) constitute a Tify domain. The tract at residues 152 to 177 (GVDKNTGTAATQSLPRPAHNSLPDLP) is disordered. The segment covering 156-165 (NTGTAATQSL) has biased composition (polar residues). A Jas motif is present at residues 177–202 (PIARRNSLHRFLEKRKGRMNANAPYQ). The Nuclear localization signal motif lies at 179-186 (ARRNSLHR).

The protein belongs to the TIFY/JAZ family. Interacts with BHLH148. Interacts with COI1B in a coronatine-dependent manner. Coronatine is an analog of jasmonoyl isoleucine (JA-Ile). Interacts with TIFY5/JAZ2, TIFY6B/JAZ4, TIFY9/JAZ5, TIFY11A, TIFY11D/JAZ12, TIFY11G/JAZ15 and NINJA1. In terms of processing, ubiquitinated. Increase in jasmonoyl isoleucine (JA-Ile) levels mediates its degradation via COI1B-mediated proteasome pathway.

The protein localises to the nucleus. The protein resides in the cytoplasm. It is found in the cytosol. In terms of biological role, repressor of jasmonate (JA) responses. Acts as a repressor of JA-induced resistance to the bacterial blight pathogen Xanthomonas oryzae pv. oryzae (Xoo). Regulates JA-induced accumulation of linalool at the transcriptional level of linalool synthase gene LIS. Linalool is important for resistance to bacterial blight pathogen Xoo. The polypeptide is Protein TIFY 10c (Oryza sativa subsp. japonica (Rice)).